Here is a 1008-residue protein sequence, read N- to C-terminus: Pre-mRNA-splicing factor SNU114 (1008 aa).

Residue Ser85 is modified to Phosphoserine. Thr88 is modified (phosphothreonine). A tr-type G domain is found at 131–338; it reads ERIINVGVIG…SYYYAHSIPS (208 aa). The tract at residues 140-147 is G1; that stretch reads GPLHSGKT. A GTP-binding site is contributed by 140-147; sequence GPLHSGKT. The segment at 188 to 192 is G2; the sequence is GLSIK. Residues 214–217 are G3; sequence DAPG. GTP-binding positions include 214 to 218 and 268 to 271; these read DAPGH and NKLD. The tract at residues 268–271 is G4; that stretch reads NKLD. Residues 315-317 form a G5 region; the sequence is STK. The segment at 504-536 is disordered; that stretch reads TSQSESRQKRQLHDISKTETSNEDEDEDDETPS. The segment covering 509 to 520 has biased composition (basic and acidic residues); the sequence is SRQKRQLHDISK. The segment covering 524–536 has biased composition (acidic residues); it reads SNEDEDEDDETPS.

Belongs to the TRAFAC class translation factor GTPase superfamily. Classic translation factor GTPase family. EF-G/EF-2 subfamily. As to quaternary structure, belongs to the CWC complex (or CEF1-associated complex), a spliceosome sub-complex reminiscent of a late-stage spliceosome composed of the U2, U5 and U6 snRNAs and at least BUD13, BUD31, BRR2, CDC40, CEF1, CLF1, CUS1, CWC2, CWC15, CWC21, CWC22, CWC23, CWC24, CWC25, CWC27, ECM2, HSH155, IST3, ISY1, LEA1, MSL1, NTC20, PRP8, PRP9, PRP11, PRP19, PRP21, PRP22, PRP45, PRP46, SLU7, SMB1, SMD1, SMD2, SMD3, SMX2, SMX3, SNT309, SNU114, SPP2, SYF1, SYF2, RSE1 and YJU2. Component of the U4/U6-U5 tri-snRNP complex composed of the U4, U6 and U5 snRNAs and at least PRP3, PRP4, PRP6, PRP8, PRP18, PRP31, PRP38, SNU13, SNU23, SNU66, SNU114, SPP381, SMB1, SMD1, SMD2, SMD3, SMX2, SMX3, LSM2, LSM3, LSM4, LSM5, LSM6, LSM7, LSM8, BRR2 and DIB1. Interacts (via C-terminus) with CWC21. Interacts (via N-terminus) with PRP8 (via SCwid domain).

The protein localises to the nucleus. Functionally, component of the U5 snRNP complex required for pre-mRNA splicing. Binds GTP. In Saccharomyces cerevisiae (strain ATCC 204508 / S288c) (Baker's yeast), this protein is Pre-mRNA-splicing factor SNU114 (SNU114).